We begin with the raw amino-acid sequence, 305 residues long: Sulfate adenylyltransferase subunit 2 (305 aa).

The protein belongs to the PAPS reductase family. CysD subfamily. Heterodimer composed of CysD, the smaller subunit, and CysN.

It catalyses the reaction sulfate + ATP + H(+) = adenosine 5'-phosphosulfate + diphosphate. The protein operates within sulfur metabolism; hydrogen sulfide biosynthesis; sulfite from sulfate: step 1/3. In terms of biological role, with CysN forms the ATP sulfurylase (ATPS) that catalyzes the adenylation of sulfate producing adenosine 5'-phosphosulfate (APS) and diphosphate, the first enzymatic step in sulfur assimilation pathway. APS synthesis involves the formation of a high-energy phosphoric-sulfuric acid anhydride bond driven by GTP hydrolysis by CysN coupled to ATP hydrolysis by CysD. In Myxococcus xanthus (strain DK1622), this protein is Sulfate adenylyltransferase subunit 2.